Here is a 94-residue protein sequence, read N- to C-terminus: Progonadoliberin-3 (94 aa).

Positions 1–23 (MEWKGRVLVQLLMLVCVLEVSLC) are cleaved as a signal peptide. Residue Gln24 is modified to Pyrrolidone carboxylic acid. Gly33 is modified (glycine amide).

The protein belongs to the GnRH family.

It is found in the secreted. Its function is as follows. Stimulates the secretion of gonadotropins. This chain is Progonadoliberin-3 (gnrh3), found in Rutilus rutilus (Roach).